The chain runs to 124 residues: Small ribosomal subunit protein uS12c (124 aa).

The protein belongs to the universal ribosomal protein uS12 family. Part of the 30S ribosomal subunit.

Its subcellular location is the plastid. It is found in the chloroplast. In terms of biological role, with S4 and S5 plays an important role in translational accuracy. Located at the interface of the 30S and 50S subunits. This Ostreococcus tauri protein is Small ribosomal subunit protein uS12c (rps12).